A 973-amino-acid chain; its full sequence is Microtubule-associated protein 1S (973 aa).

The necessary for the microtubule-organizing center localization stretch occupies residues Met1 to Ser716. Disordered stretches follow at residues His452 to Ala538 and Leu560 to Pro853. Polar residues predominate over residues Arg459–Ser468. A Phosphoserine modification is found at Ser462. Residues Val490–Arg506 are compositionally biased toward basic and acidic residues. The segment covering Pro565–Ala582 has biased composition (pro residues). Phosphoserine is present on residues Ser586, Ser591, and Ser593. The interval Pro601 to Phe973 is necessary for interaction with RASSF1. Low complexity predominate over residues Ala603–Leu621. Residues Asp645–Asn880 are necessary for association with microtubules. 2 positions are modified to phosphoserine: Ser660 and Ser684. Positions Pro703–Ala722 are enriched in low complexity. A Phosphoserine modification is found at Ser724. The segment covering Asp736–Asp749 has biased composition (pro residues). Residues Ala782 to Lys801 show a composition bias toward low complexity. Residues Gly875–Phe973 are necessary for association with actin. A necessary for the mitochondrial aggregation and genome destruction region spans residues Phe881–Ala905.

Belongs to the MAP1 family. As to quaternary structure, heterodimer of a heavy and a light chain. Interacts with microtubules and actin. Both MAP1S heavy and light chains interact with microtubules. MAP1S light chain interacts with actin. Interacts with ESR1, LRPPRC, RASSF1, microtubules and VCY2. Interacts with WDR47 (via N-terminus of light chain). Interacts (via C-terminus) with GAN (via Kelch domains). Expressed in ventral and dorsal horns of the spinal cord, hippocampus, cerebral cortex, molecular, Purkinje and granular cell layers of the cerebellum and in dorsal root ganglia of the PNS (at protein level). Expressed in brain, testis, heart, lung, kidney and liver.

It localises to the nucleus. It is found in the cytoplasm. The protein localises to the cytosol. The protein resides in the cytoskeleton. Its subcellular location is the spindle. In terms of biological role, microtubule-associated protein that mediates aggregation of mitochondria resulting in cell death and genomic destruction (MAGD). Plays a role in anchoring the microtubule organizing center to the centrosomes. Binds to DNA. Plays a role in apoptosis. Involved in the formation of microtubule bundles. The protein is Microtubule-associated protein 1S (Map1s) of Mus musculus (Mouse).